Here is a 297-residue protein sequence, read N- to C-terminus: CASP-like protein 2U8 (297 aa).

The Cytoplasmic portion of the chain corresponds to 1-10 (MLELYEKRRA). The chain crosses the membrane as a helical span at residues 11-31 (LLLLRLAAMFLSLAALLITVL). Topologically, residues 32-64 (NREDGFFSINVFGSPQPILAKATADFTLVKGLK) are extracellular. The chain crosses the membrane as a helical span at residues 65–85 (FFAGAMGIVAGYSFLQLAIAM). Over 86-101 (ASIFSGAPSILGGKRM) the chain is Cytoplasmic. Residues 102–122 (AWLCFVGDMTASHLCAAAAAV) form a helical membrane-spanning segment. Topologically, residues 123–148 (SAQLAYLGKRGAPMWSAVCTYFSHYC) are extracellular. Residues 149–169 (LVFGLAVILAFLATLAALLVA) traverse the membrane as a helical segment. Topologically, residues 170-297 (SISSYHLAYD…RVLEMETPCK (128 aa)) are cytoplasmic.

The protein belongs to the Casparian strip membrane proteins (CASP) family. Homodimer and heterodimers.

The protein localises to the cell membrane. The sequence is that of CASP-like protein 2U8 from Selaginella moellendorffii (Spikemoss).